The primary structure comprises 421 residues: D-aspartate ligase (421 aa).

The ATP-grasp domain occupies 130–332 (YEVCEEYDLP…LARFVTEDRV (203 aa)). 161–224 (PFEFPVALKP…QDFIPGDDSN (64 aa)) contributes to the ATP binding site. Mg(2+) contacts are provided by aspartate 290, glutamate 304, and asparagine 306.

Mg(2+) serves as cofactor.

The enzyme catalyses [beta-GlcNAc-(1-&gt;4)-Mur2Ac(oyl-L-Ala-gamma-D-Glu-L-Lys-D-Ala-D-Ala)](n) + n D-aspartate + n ATP = [beta-GlcNAc-(1-&gt;4)-Mur2Ac(oyl-L-Ala-gamma-D-Glu-6-N-(beta-D-Asp)-L-Lys-D-Ala-D-Ala)]n + n ADP + n phosphate + n H(+). Its pathway is cell wall biogenesis; peptidoglycan biosynthesis. Functionally, catalyzes the addition of D-aspartate onto the lysine residue in the peptidoglycan precursor UDP-MurNAc-pentapeptide. The ligation occurs between the beta-carboxylate of D-Asp and the epsilon-amino group of L-Lys. Is highly specific for D-aspartate, as L-aspartate, D-glutamate, D-alanine, D-iso-asparagine and D-malate are not substrates. The chain is D-aspartate ligase from Enterococcus faecium (strain Aus0004).